We begin with the raw amino-acid sequence, 280 residues long: Serine protease 33 (280 aa).

The signal sequence occupies residues 1–22 (MRGVSCLQVLLLLVLGAAGTQG). The region spanning 37-279 (IVGGRDGRDG…YSPWIQARVS (243 aa)) is the Peptidase S1 domain. Cys62 and Cys78 are oxidised to a cystine. Catalysis depends on charge relay system residues His77 and Asp126. Intrachain disulfides connect Cys160-Cys237, Cys193-Cys216, and Cys227-Cys255. The active-site Charge relay system is the Ser231.

It belongs to the peptidase S1 family. As to expression, predominantly expressed in macrophages. Present in the spleen, small and large intestine, lung and brain (at protein level). Highly expressed in peripheral leukocytes, ovary, retina, spleen and stomach. Moderately expressed in thymus, uterus and platelets, as well as some brain tissues, such as thalamus and fetal brain.

The protein resides in the secreted. Serine protease that has amidolytic activity, cleaving its substrates before Arg residues. The polypeptide is Serine protease 33 (PRSS33) (Homo sapiens (Human)).